The primary structure comprises 112 residues: MSDESPIIFTDSCCAKVADLIAEENNPDLKLRVFVNGGGCSGFQYGFTFDEIKNDDDFEIEKNGLVFLVDPMSYQYLVGAEIDYTESLQGSQFVIRNPNAETTCGCGSSFSV.

3 residues coordinate iron-sulfur cluster: C40, C104, and C106.

It belongs to the HesB/IscA family. Homodimer. Iron-sulfur cluster serves as cofactor.

Required for insertion of 4Fe-4S clusters. The sequence is that of Putative iron-sulfur cluster insertion protein ErpA from Neisseria gonorrhoeae (strain ATCC 700825 / FA 1090).